The sequence spans 90 residues: Small ribosomal subunit protein bS16 (90 aa).

The protein belongs to the bacterial ribosomal protein bS16 family.

In Lactococcus lactis subsp. lactis (strain IL1403) (Streptococcus lactis), this protein is Small ribosomal subunit protein bS16.